The sequence spans 660 residues: UvrABC system protein B (660 aa).

The 154-residue stretch at 24–177 (KGFKEGNQFE…DDLARALIDL (154 aa)) folds into the Helicase ATP-binding domain. Position 37 to 44 (37 to 44 (GVTGSGKT)) interacts with ATP. Residues 90-113 (YYDYYQPEAYVPQSDTYIAKDSSV) carry the Beta-hairpin motif. A Helicase C-terminal domain is found at 428 to 594 (QIDDLVSEVN…TIQKSVRDLI (167 aa)). Residues 620 to 655 (EKHIADIEKKMKKAAAELNFEAAAEYRDKLIMLKNT) enclose the UVR domain.

Belongs to the UvrB family. Forms a heterotetramer with UvrA during the search for lesions. Interacts with UvrC in an incision complex.

The protein localises to the cytoplasm. In terms of biological role, the UvrABC repair system catalyzes the recognition and processing of DNA lesions. A damage recognition complex composed of 2 UvrA and 2 UvrB subunits scans DNA for abnormalities. Upon binding of the UvrA(2)B(2) complex to a putative damaged site, the DNA wraps around one UvrB monomer. DNA wrap is dependent on ATP binding by UvrB and probably causes local melting of the DNA helix, facilitating insertion of UvrB beta-hairpin between the DNA strands. Then UvrB probes one DNA strand for the presence of a lesion. If a lesion is found the UvrA subunits dissociate and the UvrB-DNA preincision complex is formed. This complex is subsequently bound by UvrC and the second UvrB is released. If no lesion is found, the DNA wraps around the other UvrB subunit that will check the other stand for damage. In Agathobacter rectalis (strain ATCC 33656 / DSM 3377 / JCM 17463 / KCTC 5835 / VPI 0990) (Eubacterium rectale), this protein is UvrABC system protein B.